The following is a 269-amino-acid chain: Putative hydro-lyase Atu3911 (269 aa).

The protein belongs to the D-glutamate cyclase family.

In Agrobacterium fabrum (strain C58 / ATCC 33970) (Agrobacterium tumefaciens (strain C58)), this protein is Putative hydro-lyase Atu3911.